The following is a 181-amino-acid chain: Shikimate kinase (181 aa).

An ATP-binding site is contributed by G11 to K16. S15 is a Mg(2+) binding site. Substrate is bound by residues D33, R58, and G80. R128 serves as a coordination point for ATP. A substrate-binding site is contributed by R144.

This sequence belongs to the shikimate kinase family. As to quaternary structure, monomer. Mg(2+) is required as a cofactor.

It localises to the cytoplasm. It catalyses the reaction shikimate + ATP = 3-phosphoshikimate + ADP + H(+). Its pathway is metabolic intermediate biosynthesis; chorismate biosynthesis; chorismate from D-erythrose 4-phosphate and phosphoenolpyruvate: step 5/7. Its function is as follows. Catalyzes the specific phosphorylation of the 3-hydroxyl group of shikimic acid using ATP as a cosubstrate. The sequence is that of Shikimate kinase from Leptospira biflexa serovar Patoc (strain Patoc 1 / Ames).